A 337-amino-acid polypeptide reads, in one-letter code: DNA-directed RNA polymerase subunit alpha (337 aa).

The alpha N-terminal domain (alpha-NTD) stretch occupies residues 1–233 (MIREKVTVST…DLFIPFLHME (233 aa)). Positions 266–337 (KLALKSIFID…FAIDLPKNQF (72 aa)) are alpha C-terminal domain (alpha-CTD).

The protein belongs to the RNA polymerase alpha chain family. In terms of assembly, in plastids the minimal PEP RNA polymerase catalytic core is composed of four subunits: alpha, beta, beta', and beta''. When a (nuclear-encoded) sigma factor is associated with the core the holoenzyme is formed, which can initiate transcription.

Its subcellular location is the plastid. The protein localises to the chloroplast. The catalysed reaction is RNA(n) + a ribonucleoside 5'-triphosphate = RNA(n+1) + diphosphate. In terms of biological role, DNA-dependent RNA polymerase catalyzes the transcription of DNA into RNA using the four ribonucleoside triphosphates as substrates. This chain is DNA-directed RNA polymerase subunit alpha, found in Ipomoea purpurea (Common morning glory).